The sequence spans 671 residues: UvrABC system protein B (671 aa).

The region spanning Glu-25–Arg-412 is the Helicase ATP-binding domain. Gly-38–Thr-45 contacts ATP. The Beta-hairpin motif lies at Tyr-91–Ile-114. The region spanning Gln-429–Ile-582 is the Helicase C-terminal domain. The segment at Pro-601–Asn-623 is disordered. Residues Ala-614–Asn-623 show a composition bias toward basic and acidic residues. Positions Thr-632–Arg-667 constitute a UVR domain.

This sequence belongs to the UvrB family. In terms of assembly, forms a heterotetramer with UvrA during the search for lesions. Interacts with UvrC in an incision complex.

It is found in the cytoplasm. The UvrABC repair system catalyzes the recognition and processing of DNA lesions. A damage recognition complex composed of 2 UvrA and 2 UvrB subunits scans DNA for abnormalities. Upon binding of the UvrA(2)B(2) complex to a putative damaged site, the DNA wraps around one UvrB monomer. DNA wrap is dependent on ATP binding by UvrB and probably causes local melting of the DNA helix, facilitating insertion of UvrB beta-hairpin between the DNA strands. Then UvrB probes one DNA strand for the presence of a lesion. If a lesion is found the UvrA subunits dissociate and the UvrB-DNA preincision complex is formed. This complex is subsequently bound by UvrC and the second UvrB is released. If no lesion is found, the DNA wraps around the other UvrB subunit that will check the other stand for damage. In Pseudomonas fluorescens (strain ATCC BAA-477 / NRRL B-23932 / Pf-5), this protein is UvrABC system protein B.